A 268-amino-acid chain; its full sequence is Calpain small subunit 1 (268 aa).

An N-acetylmethionine modification is found at methionine 1. The residue at position 6 (serine 6) is a Phosphoserine. The region spanning glutamate 96 to arginine 130 is the EF-hand 1; atypical domain. Ca(2+) contacts are provided by alanine 109, aspartate 112, glutamate 114, glutamate 119, aspartate 137, aspartate 152, aspartate 154, threonine 156, lysine 158, and glutamate 163. 4 consecutive EF-hand domains span residues phenylalanine 139–lysine 172, asparagine 169–histidine 204, leucine 205–leucine 233, and valine 234–serine 268. Residue lysine 179 is modified to N6-acetyllysine. The Ca(2+) site is built by aspartate 182, aspartate 184, serine 186, threonine 188, glutamate 193, and aspartate 225.

Homodimer or heterodimer of a large (catalytic) and a small (regulatory) subunit. In presence of calcium, the heterodimer dissociates.

The protein localises to the cytoplasm. It is found in the cell membrane. In terms of biological role, regulatory subunit of the calcium-regulated non-lysosomal thiol-protease which catalyzes limited proteolysis of substrates involved in cytoskeletal remodeling and signal transduction. Essential for embryonic development. This chain is Calpain small subunit 1 (Capns1), found in Mus musculus (Mouse).